Reading from the N-terminus, the 105-residue chain is Ferredoxin-2 (105 aa).

Residues 4–94 (YQVEVIYQGQ…DLKIETHKED (91 aa)) form the 2Fe-2S ferredoxin-type domain. [2Fe-2S] cluster-binding residues include C40, C45, C48, and C78.

Belongs to the 2Fe2S plant-type ferredoxin family. Forms a complex with heterodimeric ferredoxin-thioredoxin reductase (FTR) and thioredoxin. It depends on [2Fe-2S] cluster as a cofactor.

In terms of biological role, ferredoxins are iron-sulfur proteins that transfer electrons in a wide variety of metabolic reactions. The polypeptide is Ferredoxin-2 (petF2) (Synechococcus sp. (strain ATCC 27144 / PCC 6301 / SAUG 1402/1) (Anacystis nidulans)).